The chain runs to 583 residues: Steryl-sulfatase (583 aa).

Positions 1 to 21 (MPLRKMKIPFLLLFFLWEAES) are cleaved as a signal peptide. Topologically, residues 22-184 (HAASRPNIIL…GSVFTTGFKR (163 aa)) are lumenal. Ca(2+) contacts are provided by D35 and D36. N47 carries N-linked (GlcNAc...) asparagine glycosylation. Residue C75 participates in Ca(2+) binding. C75 serves as the catalytic Nucleophile. Position 75 is a 3-oxoalanine (Cys) (C75). H136 is an active-site residue. 2 disulfides stabilise this stretch: C141–C148 and C170–C242. A helical membrane pass occupies residues 185-208 (LVFLPLQIVGVTLLTLAALNCLGL). Residues 209–212 (LHVP) are Cytoplasmic-facing. Residues 213-234 (LGVFFSLLFLAALILTLFLGFL) form a helical membrane-spanning segment. At 235–583 (HYFRPLNCFM…REKQDKRLSR (349 aa)) the chain is on the lumenal side. N259 carries an N-linked (GlcNAc...) asparagine glycan. Ca(2+) is bound by residues D342 and Q343. 4 cysteine pairs are disulfide-bonded: C446/C489, C481/C487, C562/C570, and C563/C572.

It belongs to the sulfatase family. In terms of assembly, homodimer. Requires Ca(2+) as cofactor. In terms of processing, the conversion to 3-oxoalanine (also known as C-formylglycine, FGly), of a serine or cysteine residue in prokaryotes and of a cysteine residue in eukaryotes, is critical for catalytic activity.

It is found in the cytoplasmic vesicle. Its subcellular location is the secretory vesicle. It localises to the microneme membrane. The protein resides in the endoplasmic reticulum membrane. The enzyme catalyses dehydroepiandrosterone 3-sulfate + H2O = 3beta-hydroxyandrost-5-en-17-one + sulfate + H(+). The catalysed reaction is estrone 3-sulfate + H2O = estrone + sulfate + H(+). Functionally, catalyzes the conversion of sulfated steroid precursors, such as dehydroepiandrosterone sulfate (DHEA-S) and estrone sulfate to the free steroid. This is Steryl-sulfatase (STS) from Homo sapiens (Human).